We begin with the raw amino-acid sequence, 240 residues long: Lactate utilization protein C (240 aa).

This sequence belongs to the LutC/YkgG family.

In terms of biological role, is involved in L-lactate degradation and allows cells to grow with lactate as the sole carbon source. The chain is Lactate utilization protein C from Bacillus pumilus (strain SAFR-032).